We begin with the raw amino-acid sequence, 342 residues long: N-acetyl-gamma-glutamyl-phosphate reductase (342 aa).

The active site involves cysteine 149.

It belongs to the NAGSA dehydrogenase family. Type 1 subfamily.

The protein resides in the cytoplasm. The catalysed reaction is N-acetyl-L-glutamate 5-semialdehyde + phosphate + NADP(+) = N-acetyl-L-glutamyl 5-phosphate + NADPH + H(+). Its pathway is amino-acid biosynthesis; L-arginine biosynthesis; N(2)-acetyl-L-ornithine from L-glutamate: step 3/4. Functionally, catalyzes the NADPH-dependent reduction of N-acetyl-5-glutamyl phosphate to yield N-acetyl-L-glutamate 5-semialdehyde. This Nitrosomonas eutropha (strain DSM 101675 / C91 / Nm57) protein is N-acetyl-gamma-glutamyl-phosphate reductase.